Reading from the N-terminus, the 688-residue chain is Lipase (688 aa).

An N-terminal signal peptide occupies residues 1 to 35; it reads MKTRQNKYSIRKFSVGASSILIAALLFMGGGSAQA. The disordered stretch occupies residues 31-309; the sequence is GSAQAAEQQQ…KSAKQKQYKN (279 aa). A propeptide spans 36 to 302 (removed in mature form); the sequence is AEQQQDKGTV…KNEDQTNKSA (267 aa). Over residues 45–54 the composition is skewed to polar residues; sequence VENSTTQSIG. Positions 68-79 are enriched in low complexity; that stretch reads NKNVNEKSNVNS. Basic and acidic residues-rich tracts occupy residues 84-95, 103-117, and 126-143; these read ESLHNETPKNED, SQNDNKSESVVEQNK, and HSEEKPQQEQVELEKHAS. The span at 144 to 172 shows a compositional bias: polar residues; it reads ENNQTLHSKAAQSNEDVKTKPSQLDNTAA. Residues 173–183 show a composition bias toward basic and acidic residues; sequence KQEDSQKENLS. Positions 184 to 211 are enriched in polar residues; it reads KQDTQSSKTTDLLRATAQNQSKDSQSTE. The segment covering 240–267 has biased composition (basic and acidic residues); that stretch reads SKEEPLKVDKQANPTTDKDKSSKNDKGS. A compositionally biased stretch (polar residues) spans 274–289; sequence LESNAVATTNKQSKQQ. Residue Ser-418 is the Nucleophile of the active site. Asp-609 (charge relay system) is an active-site residue. Asp-647 serves as a coordination point for Ca(2+). His-648 functions as the Charge relay system in the catalytic mechanism. Ca(2+)-binding residues include Asp-650, Asp-655, and Asp-658.

The protein belongs to the AB hydrolase superfamily. Lipase family.

It localises to the secreted. It carries out the reaction a triacylglycerol + H2O = a diacylglycerol + a fatty acid + H(+). The protein is Lipase (lip) of Staphylococcus epidermidis.